We begin with the raw amino-acid sequence, 144 residues long: Large ribosomal subunit protein uL15 (144 aa).

A disordered region spans residues 1–48 (MQLNNLKPAAGSKHAKRRVGRGIGSGLGKTAGRGHKGQKSRSGGFHKV). Over residues 21–31 (RGIGSGLGKTA) the composition is skewed to gly residues.

Belongs to the universal ribosomal protein uL15 family. Part of the 50S ribosomal subunit.

Functionally, binds to the 23S rRNA. This is Large ribosomal subunit protein uL15 from Cupriavidus taiwanensis (strain DSM 17343 / BCRC 17206 / CCUG 44338 / CIP 107171 / LMG 19424 / R1) (Ralstonia taiwanensis (strain LMG 19424)).